Reading from the N-terminus, the 1610-residue chain is E3 ubiquitin-protein ligase listerin (1610 aa).

Basic and acidic residues predominate over residues 1 to 10 (MKKKSTDLYG). Residues 1 to 20 (MKKKSTDLYGRKNPGMQSMS) form a disordered region. 12 HEAT repeats span residues 110–148 (LKIFVFMSVLSSALQKKLAPWLKFYITPWVMGFFDSDRA), 314–351 (VPMLRLLSNMISNFPNEVHQFANDSKRPLSKLFSNLIT), 372–408 (IGAMQLVPSIESVDELCDAFLETANQEQRFLSTEVYD), 409–443 (CLLNFLSFVYTDSSDPQIKDHVRDRLRTIFTRYFK), 590–626 (SPAFTLLRDILLLLKDYADLSEPWENVANQFTVSFDE), 627–664 (LENIRVLNSLPSLFADGKLRGKISLVKTLVEYYDTAVF), 736–773 (KSLYSLLPVILFSKPEDDGHVAAHFESIFSLLKEKALE), 965–1003 (GKMPVLFKRFKNLSSAENTTSFSIFAAQGLTDFLIVVSN), 1119–1156 (CCFLRFMYYFLPTVFSLSGSYWNSIFDYIKYAMKMSVV), 1322–1354 (RVYLLVWDLIFYHFEETTYNIKLSIINQLHAMD), 1355–1393 (LLRPLLNTLVEILNLSYDRPINVDKYPKIDYNLMDYSSA), and 1435–1473 (FTGYNVSPLLISASLDDVERSIESEDFQSVGDVNVKVNR). An RING-type; atypical zinc finger spans residues 1558-1604 (CAICYSVLSVERTLPNKRCGTCRHKFHASCLYKWFKSSNSSRCPLCR).

This sequence belongs to the LTN1 family. As to quaternary structure, component of the ribosome quality control complex (RQC), composed of the E3 ubiquitin ligase rkr1/ltn1, rqc1 and mtr1/rqc2, as well as cdc48 and its ubiquitin-binding cofactors. RQC forms a stable complex with 60S ribosomal subunits.

It localises to the nucleus. Its subcellular location is the cytoplasm. The protein localises to the cytosol. The catalysed reaction is S-ubiquitinyl-[E2 ubiquitin-conjugating enzyme]-L-cysteine + [acceptor protein]-L-lysine = [E2 ubiquitin-conjugating enzyme]-L-cysteine + N(6)-ubiquitinyl-[acceptor protein]-L-lysine.. It participates in protein modification; protein ubiquitination. E3 ubiquitin-protein ligase component of the ribosome quality control complex (RQC), a ribosome-associated complex that mediates ubiquitination and extraction of incompletely synthesized nascent chains for proteasomal degradation. Mediates ubiquitination of proteins derived from mRNAs lacking stop codons (non-stop proteins) and other translation arrest products induced by poly-lysine sequences and tandem rare codons. Ubiquitination leads to cdc48 recruitment for extraction and degradation of the incomplete translation product. May indirectly play a role in chromatin function and transcription. This is E3 ubiquitin-protein ligase listerin from Schizosaccharomyces pombe (strain 972 / ATCC 24843) (Fission yeast).